A 150-amino-acid polypeptide reads, in one-letter code: Developmental pluripotency-associated protein 3 (150 aa).

The segment covering 1 to 22 (MEEPSEKVDPMKDPETPQKKDE) has biased composition (basic and acidic residues). Residues 1–32 (MEEPSEKVDPMKDPETPQKKDEEDALDDTDVL) form a disordered region. The required for H3K9me2-binding stretch occupies residues 1-75 (MEEPSEKVDP…VPVENKSEKI (75 aa)). Residues 76-150 (RREVQSAFPK…PSENAKIGKN (75 aa)) form a required to exclude TET3 from the maternal pronucleus region.

As to expression, expressed in the immature oocytes and in newborn ovaries. Subsequently detected in maturing oocytes and in preimplantation embryos. Expressed in pluripotent embryonic but not in differentiated somatic cells. Expressed in blastocysts, epiblasts, primordial germ cells, embryonic gonads and primitive spermatogonia. No expression is detected in adult testes.

It localises to the nucleus. The protein resides in the cytoplasm. In terms of biological role, primordial germ cell (PGCs)-specific protein involved in epigenetic chromatin reprogramming in the zygote following fertilization. In zygotes, DNA demethylation occurs selectively in the paternal pronucleus before the first cell division, while the adjacent maternal pronucleus and certain paternally-imprinted loci are protected from this process. Participates in protection of DNA methylation in the maternal pronucleus by preventing conversion of 5mC to 5hmC: specifically recognizes and binds histone H3 dimethylated at 'Lys-9' (H3K9me2) on maternal genome, and protects maternal genome from TET3-mediated conversion to 5hmC and subsequent DNA demethylation. Does not bind paternal chromatin, which is mainly packed into protamine and does not contain much H3K9me2 mark. Also protects imprinted loci that are marked with H3K9me2 in mature sperm from DNA demethylation in early embryogenesis. May be important for the totipotent/pluripotent states continuing through preimplantation development. Also involved in chromatin condensation in oocytogenesis. The chain is Developmental pluripotency-associated protein 3 (Dppa3) from Mus musculus (Mouse).